A 217-amino-acid chain; its full sequence is Large ribosomal subunit protein uL1 (217 aa).

The protein belongs to the universal ribosomal protein uL1 family.

The protein is Large ribosomal subunit protein uL1 (RpL10A) of Spodoptera frugiperda (Fall armyworm).